The following is a 158-amino-acid chain: PTS system fructose-specific EIIB component (158 aa).

Positions 1–98 (MKLVAVTSCP…AEAVVQKAVE (98 aa)) constitute a PTS EIIB type-2 domain. Cys-9 (phosphocysteine intermediate) is an active-site residue. Residue Cys-9 is modified to Phosphocysteine; by EIIA. The segment at 104–147 (KTGSVTFGSGDDGEDADVGADDSSDDADAAESDEPVRRGGDPEK) is disordered. Acidic residues predominate over residues 114-136 (DDGEDADVGADDSSDDADAAESD). Residues 137–147 (EPVRRGGDPEK) show a composition bias toward basic and acidic residues.

It is found in the cytoplasm. The catalysed reaction is D-fructose(out) + N(pros)-phospho-L-histidyl-[protein] = D-fructose 1-phosphate(in) + L-histidyl-[protein]. The phosphoenolpyruvate-dependent sugar phosphotransferase system (sugar PTS), a major carbohydrate active transport system, catalyzes the phosphorylation of incoming sugar substrates concomitantly with their translocation across the cell membrane. The enzyme II PtfABC PTS system is involved in fructose transport. The sequence is that of PTS system fructose-specific EIIB component from Haloferax volcanii (strain ATCC 29605 / DSM 3757 / JCM 8879 / NBRC 14742 / NCIMB 2012 / VKM B-1768 / DS2) (Halobacterium volcanii).